The chain runs to 108 residues: Protein RnfH (108 aa).

The protein belongs to the UPF0125 (RnfH) family.

The protein is Protein RnfH of Laribacter hongkongensis (strain HLHK9).